We begin with the raw amino-acid sequence, 209 residues long: Ribosomal RNA large subunit methyltransferase E (209 aa).

Positions 63, 65, 83, 99, and 124 each coordinate S-adenosyl-L-methionine. Catalysis depends on lysine 164, which acts as the Proton acceptor.

Belongs to the class I-like SAM-binding methyltransferase superfamily. RNA methyltransferase RlmE family.

It is found in the cytoplasm. The enzyme catalyses uridine(2552) in 23S rRNA + S-adenosyl-L-methionine = 2'-O-methyluridine(2552) in 23S rRNA + S-adenosyl-L-homocysteine + H(+). Functionally, specifically methylates the uridine in position 2552 of 23S rRNA at the 2'-O position of the ribose in the fully assembled 50S ribosomal subunit. This chain is Ribosomal RNA large subunit methyltransferase E, found in Baumannia cicadellinicola subsp. Homalodisca coagulata.